We begin with the raw amino-acid sequence, 174 residues long: Protein GrpE (174 aa).

The segment at 1–35 (MAQDIKNEEVEEVQEEEVVETAEETTPEKSELDLA) is disordered. Over residues 9 to 25 (EVEEVQEEEVVETAEET) the composition is skewed to acidic residues. The segment covering 26-35 (TPEKSELDLA) has biased composition (basic and acidic residues).

Belongs to the GrpE family. In terms of assembly, homodimer.

It localises to the cytoplasm. Functionally, participates actively in the response to hyperosmotic and heat shock by preventing the aggregation of stress-denatured proteins, in association with DnaK and GrpE. It is the nucleotide exchange factor for DnaK and may function as a thermosensor. Unfolded proteins bind initially to DnaJ; upon interaction with the DnaJ-bound protein, DnaK hydrolyzes its bound ATP, resulting in the formation of a stable complex. GrpE releases ADP from DnaK; ATP binding to DnaK triggers the release of the substrate protein, thus completing the reaction cycle. Several rounds of ATP-dependent interactions between DnaJ, DnaK and GrpE are required for fully efficient folding. This chain is Protein GrpE, found in Streptococcus pneumoniae (strain ATCC 700669 / Spain 23F-1).